The following is a 446-amino-acid chain: ATP-dependent protease ATPase subunit HslU (446 aa).

ATP is bound by residues Val18, 60-65, Asp259, Glu324, and Arg396; that span reads GVGKTE.

The protein belongs to the ClpX chaperone family. HslU subfamily. As to quaternary structure, a double ring-shaped homohexamer of HslV is capped on each side by a ring-shaped HslU homohexamer. The assembly of the HslU/HslV complex is dependent on binding of ATP.

It localises to the cytoplasm. In terms of biological role, ATPase subunit of a proteasome-like degradation complex; this subunit has chaperone activity. The binding of ATP and its subsequent hydrolysis by HslU are essential for unfolding of protein substrates subsequently hydrolyzed by HslV. HslU recognizes the N-terminal part of its protein substrates and unfolds these before they are guided to HslV for hydrolysis. This is ATP-dependent protease ATPase subunit HslU from Acidovorax ebreus (strain TPSY) (Diaphorobacter sp. (strain TPSY)).